The primary structure comprises 350 residues: 8-amino-7-oxononanoate synthase (350 aa).

Position 77–78 (77–78 (GY)) interacts with pyridoxal 5'-phosphate. Residue histidine 102 participates in substrate binding. Pyridoxal 5'-phosphate is bound by residues serine 150, 175-178 (DDAH), and 204-207 (TLSK). Lysine 207 is subject to N6-(pyridoxal phosphate)lysine. Threonine 316 lines the substrate pocket.

This sequence belongs to the class-II pyridoxal-phosphate-dependent aminotransferase family. BioF subfamily. Homodimer. Pyridoxal 5'-phosphate is required as a cofactor.

It carries out the reaction 6-carboxyhexanoyl-[ACP] + L-alanine + H(+) = (8S)-8-amino-7-oxononanoate + holo-[ACP] + CO2. The protein operates within cofactor biosynthesis; biotin biosynthesis. Functionally, catalyzes the decarboxylative condensation of pimeloyl-[acyl-carrier protein] and L-alanine to produce 8-amino-7-oxononanoate (AON), [acyl-carrier protein], and carbon dioxide. This is 8-amino-7-oxononanoate synthase from Methylocella silvestris (strain DSM 15510 / CIP 108128 / LMG 27833 / NCIMB 13906 / BL2).